The primary structure comprises 259 residues: MSRLDGKTILITGASSGIGKSTAFEIAKVAKVKLILAARRFSTVEEIAKELESKYEVSVLPLKLDVSDLKSIPGVIESLPKEFADIDVLINNAGLALGTDKVIDLNIDDAVTMITTNVLGMMAMTRAVLPIFYSKNKGDILNVGSIAGRESYVGGSVYCSTKSALAQFTSALRKETIDTRIRIMEVDPGLVETEFSVVRFHGDKQKADNVYKNSEPLTPEDIAEVILFALTRRENVVIADTLVFPSHQGGANHVYRKQA.

Isoleucine 11 is an NADP(+) binding site. Position 42 is a phosphoserine (serine 42). Threonine 43 carries the phosphothreonine modification. NADP(+)-binding residues include aspartate 65, asparagine 92, arginine 126, tyrosine 158, lysine 162, and valine 191. The Proton acceptor role is filled by tyrosine 158. Lysine 162 functions as the Lowers pKa of active site Tyr in the catalytic mechanism.

The protein belongs to the short-chain dehydrogenases/reductases (SDR) family. As to quaternary structure, homotetramer.

It is found in the cytoplasm. It localises to the nucleus. The catalysed reaction is L-allo-threonine + NADP(+) = aminoacetone + CO2 + NADPH. Its function is as follows. NADP-dependent dehydrogenase with broad substrate specificity acting on 3-hydroxy acids. Catalyzes the NADP-dependent oxidation of L-allo-threonine to L-2-amino-3-keto-butyrate, which is spontaneously decarboxylated into aminoacetone. Also acts on D-threonine, L-serine, D-serine, D-3-hydroxyisobutyrate, L-3-hydroxyisobutyrate, D-glycerate and L-glycerate. This chain is NADP-dependent 3-hydroxy acid dehydrogenase, found in Schizosaccharomyces pombe (strain 972 / ATCC 24843) (Fission yeast).